The primary structure comprises 1014 residues: MSSVIKTIVVKTLQCTVKCVCVGVRQQYGLLRRHPKTIACALVGGIIAHDVLHLYAAVYRVENPWEFVPTEGPRGVIVLRVYNALRFTAAKWRWNCWTIFGKFPFNSEQFSRIMETSTERKPDLRPLLVPAHETIEVYPCNNIHSHPRSAEFRSSANEYLVRSVRRAGYPPYVVSSSKRDFCDGNRFFYCPKDFGMQFRNDPISNNHALVFTDVDYYANMNRWLQLFLPTCLYTLVPTRLNYSNDEFAYRFENNEIVYNVTGGGEYRHSLWDYKGDTVTVVDEYGNLLIFDIEQRRVQGDEQHRLIWLLPKAKITDPLWIVGPTEWYDKLLVRKTVQQGRLKILWEPIADDLSIGLHGSNYSVSLKGELFEAIRTRISCKDSTPYVSDVERMLREAKHKNFLTDAPILYHCFQDDVIIRPNVVKTGSFPVTYNAIPKKAPSVTEDPKMPGQVVTTPLVSQPALFAGKGFNADKACIEGRIEKVRNVTKFPIKYVRYAAEFVKLVIPETIAGTGVPNSIGMIREEQDKVAQRARFDRVAPIMSTQTENSIKAFIKTEMYAAAKAPRNISTMAPEITIQSSAYSLPMAKIFKKIPWYCPGKNPKEITLRLAEVCLQDPDHELEEGDYTCMDGTQSPDYSDLLLLPIYMRYFAKQYRGQFKNLYNQIYKQRATTSSGVPYNPEMTIRSGSSITTHAGTLNNAFNIYAALRDMGYDETTAWDKVGAVFGDDSLNANHQGEFHSYIEHVTKVLGMRYKSNLRERGQPVLFLGRYFVDPITSYDSFADPMRTIGKLHATANKNVSVEQGAANKAHGYITTDSKTPIIGAWARRVLEITKKKFKNGTGEEQYRCSNAWPQKDEAAIRAAMAAVLEVDEAQLIAQNEAVLKVNSLDQFPVVFDTYYDHKQLAEVDGQLVGTDLHIKEEDERQPETSIDSVPSTGPPPSNGDPNAGGKPTDGPSKGKRKVKGRRPRTAGDPATLRLTDAGSSRRVKPPRKLRPEAKRGGRPIETLVFKNSSLS.

One can recognise a RdRp catalytic domain in the interval 618-740; that stretch reads HELEEGDYTC…ANHQGEFHSY (123 aa). Positions 918–1014 are disordered; sequence KEEDERQPET…TLVFKNSSLS (97 aa). Residues 956-967 show a composition bias toward basic residues; the sequence is KGKRKVKGRRPR.

This sequence belongs to the nodaviridae RNA polymerase family.

The catalysed reaction is RNA(n) + a ribonucleoside 5'-triphosphate = RNA(n+1) + diphosphate. Functionally, RNA-dependent RNA polymerase which replicates the viral genome composed of 2 RNA segments, RNA1 and RNA2. The sequence is that of RNA-directed RNA polymerase from Pieris rapae (Small white butterfly).